The sequence spans 144 residues: Large ribosomal subunit protein uL16 (144 aa).

Residues 1-14 are compositionally biased toward basic residues; sequence MLMPKRVKYRKPHR. Residues 1–25 are disordered; that stretch reads MLMPKRVKYRKPHRPGTQGKATRGN.

It belongs to the universal ribosomal protein uL16 family. As to quaternary structure, part of the 50S ribosomal subunit.

Its function is as follows. Binds 23S rRNA and is also seen to make contacts with the A and possibly P site tRNAs. In Moorella thermoacetica (strain ATCC 39073 / JCM 9320), this protein is Large ribosomal subunit protein uL16.